The primary structure comprises 941 residues: Pre-mRNA-processing factor 6 (941 aa).

Residues 1–79 (MNKKKKPFLG…DEDLNDTNYD (79 aa)) are disordered. Positions 39–65 (DANDPVDDRHAPPGKRTVGDQMKKNQA) are enriched in basic and acidic residues. A compositionally biased stretch (acidic residues) spans 66–78 (ADDDDEDLNDTNY). At Ser-143 the chain carries Phosphoserine. A phosphothreonine mark is found at Thr-180, Thr-266, and Thr-275. Ser-279 carries the post-translational modification Phosphoserine. HAT repeat units follow at residues 384-416 (TDIRAKKRVLRKALEHVPNSVRLWKAAVELEEP), 418-444 (DARIMLSRAVECCPTSVELWLALARLE), 445-476 (TYENARKVLNKARENIPTDRHIWITAAKLEEA), 554-586 (NALECARAIYAYALQVFPSKKSVWLRAAYFEKN), 588-620 (GTRESLEALLQRAVAHCPKAEVLWLMGAKSKWL), 622-654 (GDVPAARSILALAFQANPNSEEIWLAAVKLESE), 689-721 (DNIRAAQDLCEEALRHYEDFPKLWMMKGQIEEQ), 723-755 (EMMEKAREAYNQGLKKCPHSTPLWLLLSRLEEK), and 855-887 (RKITKAREWFHRTVKIDSDLGDAWAFFYKFELQ).

Identified in the spliceosome B complex. Identified in the spliceosome C complex. Associates with the U5 snRNP particle. Component of the U4/U6-U5 tri-snRNP complex composed of the U4, U6 and U5 snRNAs and at least PRPF3, PRPF4, PRPF6, PRPF8, PRPF31, SNRNP200, TXNL4A, SNRNP40, DDX23, CD2BP2, PPIH, SNU13, EFTUD2, SART1 and USP39, LSm proteins LSm2-8 and Sm proteins. Interacts with ARAF. Interacts with AR and NR3C1, but not ESR1, independently of the presence of hormones. Interacts with USH1G. Phosphorylated by PRP4K during spliceosome assembly. Widely expressed.

The protein localises to the nucleus. It is found in the nucleoplasm. Its subcellular location is the nucleus speckle. Its function is as follows. Involved in pre-mRNA splicing as component of the U4/U6-U5 tri-snRNP complex, one of the building blocks of the spliceosome. Enhances dihydrotestosterone-induced transactivation activity of AR, as well as dexamethasone-induced transactivation activity of NR3C1, but does not affect estrogen-induced transactivation. In Homo sapiens (Human), this protein is Pre-mRNA-processing factor 6.